The chain runs to 114 residues: Large ribosomal subunit protein uL22 (114 aa).

The protein belongs to the universal ribosomal protein uL22 family. In terms of assembly, part of the 50S ribosomal subunit.

Functionally, this protein binds specifically to 23S rRNA; its binding is stimulated by other ribosomal proteins, e.g. L4, L17, and L20. It is important during the early stages of 50S assembly. It makes multiple contacts with different domains of the 23S rRNA in the assembled 50S subunit and ribosome. Its function is as follows. The globular domain of the protein is located near the polypeptide exit tunnel on the outside of the subunit, while an extended beta-hairpin is found that lines the wall of the exit tunnel in the center of the 70S ribosome. This is Large ribosomal subunit protein uL22 from Methylacidiphilum infernorum (isolate V4) (Methylokorus infernorum (strain V4)).